We begin with the raw amino-acid sequence, 544 residues long: Pentatricopeptide repeat-containing protein At1g66345, mitochondrial (544 aa).

Residues 1 to 116 constitute a mitochondrion transit peptide; that stretch reads MASALRRLVE…RNLRHGIKSY (116 aa). PPR repeat units lie at residues 163–197, 198–232, 233–267, 268–302, 303–337, 338–372, 373–407, 408–442, 443–477, 478–512, and 513–544; these read TPLVFDLLVQCYAKIRYLELGFDVFKRLCDCGFTL, SVITLNTLIHYSSKSKIDDLVWRIYECAIDKRIYP, NEITIRIMIQVLCKEGRLKEVVDLLDRICGKRCLP, SVIVNTSLVFRVLEEMRIEESMSLLKRLLMKNMVV, DTIGYSIVVYAKAKEGDLVSARKVFDEMLQRGFSA, NSFVYTVFVRVCCEKGDVKEAERLLSEMEESGVSP, YDETFNCLIGGFARFGWEEKGLEYCEVMVTRGLMP, SCSAFNEMVKSVSKIENVNRANEILTKSIDKGFVP, DEHTYSHLIRGFIEGNDIDQALKLFYEMEYRKMSP, GFEVFRSLIVGLCTCGKVEAGEKYLKIMKKRLIEP, and NADIYDALIKAFQKIGDKTNADRVYNEMISVR.

This sequence belongs to the PPR family. P subfamily.

It localises to the mitochondrion. The polypeptide is Pentatricopeptide repeat-containing protein At1g66345, mitochondrial (Arabidopsis thaliana (Mouse-ear cress)).